Consider the following 215-residue polypeptide: MTQSLADMRRDYTRDGLAEAQAPGEPFVLFHQWFADAVKTEQAPVEANAMTLATVDGEGRPHCRVLLLKGLDEQGFTFFTNYESAKGQQLQANPFAAMTFFWPALERQVRIEGRVEKVSAQESDAYYQVRPLGSRLGAWASPQSRVIAGREELEGLVKATEARFSDTQPHCPEHWGGYRLLPERIEFWQGRASRLHDRLNYRFVNGQWQRERLAP.

Residues 9–12 and lysine 69 each bind substrate; that span reads RRDY. FMN contacts are provided by residues 64–69, 79–80, lysine 86, and glutamine 108; these read RVLLLK and FT. Residues tyrosine 126, arginine 130, and serine 134 each coordinate substrate. Residues 143–144 and tryptophan 188 each bind FMN; that span reads QS. 194 to 196 provides a ligand contact to substrate; it reads RLH. Position 198 (arginine 198) interacts with FMN.

This sequence belongs to the pyridoxamine 5'-phosphate oxidase family. As to quaternary structure, homodimer. Requires FMN as cofactor.

The enzyme catalyses pyridoxamine 5'-phosphate + O2 + H2O = pyridoxal 5'-phosphate + H2O2 + NH4(+). The catalysed reaction is pyridoxine 5'-phosphate + O2 = pyridoxal 5'-phosphate + H2O2. The protein operates within cofactor metabolism; pyridoxal 5'-phosphate salvage; pyridoxal 5'-phosphate from pyridoxamine 5'-phosphate: step 1/1. It functions in the pathway cofactor metabolism; pyridoxal 5'-phosphate salvage; pyridoxal 5'-phosphate from pyridoxine 5'-phosphate: step 1/1. Catalyzes the oxidation of either pyridoxine 5'-phosphate (PNP) or pyridoxamine 5'-phosphate (PMP) into pyridoxal 5'-phosphate (PLP). This Pseudomonas putida (strain GB-1) protein is Pyridoxine/pyridoxamine 5'-phosphate oxidase.